We begin with the raw amino-acid sequence, 586 residues long: Aspartate--tRNA ligase (586 aa).

Glutamate 171 is an L-aspartate binding site. The aspartate stretch occupies residues glutamine 195–lysine 198. Arginine 217 contacts L-aspartate. ATP contacts are provided by residues arginine 217 to glutamate 219 and glutamine 226. Histidine 448 is a binding site for L-aspartate. Residue glutamate 482 participates in ATP binding. Arginine 489 provides a ligand contact to L-aspartate. Glycine 534–arginine 537 lines the ATP pocket.

This sequence belongs to the class-II aminoacyl-tRNA synthetase family. Type 1 subfamily. In terms of assembly, homodimer.

The protein localises to the cytoplasm. The enzyme catalyses tRNA(Asp) + L-aspartate + ATP = L-aspartyl-tRNA(Asp) + AMP + diphosphate. Functionally, catalyzes the attachment of L-aspartate to tRNA(Asp) in a two-step reaction: L-aspartate is first activated by ATP to form Asp-AMP and then transferred to the acceptor end of tRNA(Asp). This chain is Aspartate--tRNA ligase, found in Buchnera aphidicola subsp. Acyrthosiphon pisum (strain APS) (Acyrthosiphon pisum symbiotic bacterium).